Reading from the N-terminus, the 182-residue chain is Adenine phosphoribosyltransferase (182 aa).

It belongs to the purine/pyrimidine phosphoribosyltransferase family. As to quaternary structure, homodimer.

Its subcellular location is the cytoplasm. The catalysed reaction is AMP + diphosphate = 5-phospho-alpha-D-ribose 1-diphosphate + adenine. Its pathway is purine metabolism; AMP biosynthesis via salvage pathway; AMP from adenine: step 1/1. Its function is as follows. Catalyzes a salvage reaction resulting in the formation of AMP, that is energically less costly than de novo synthesis. The protein is Adenine phosphoribosyltransferase of Pseudomonas putida (strain GB-1).